Here is a 341-residue protein sequence, read N- to C-terminus: Holliday junction branch migration complex subunit RuvB (341 aa).

Residues 1–21 (MSQPDPMLRPEPLESDGEDRA) form a disordered region. Residues 4 to 183 (PDPMLRPEPL…FGIPTRLQFY (180 aa)) form a large ATPase domain (RuvB-L) region. ATP is bound by residues leucine 22, arginine 23, glycine 64, lysine 67, threonine 68, threonine 69, 130-132 (EDF), arginine 173, tyrosine 183, and arginine 220. A Mg(2+)-binding site is contributed by threonine 68. A small ATPAse domain (RuvB-S) region spans residues 184–254 (TIEELDLIVT…IADSALTRLG (71 aa)). Residues 257–341 (HLGLDTADRR…PRTQESLFDE (85 aa)) are head domain (RuvB-H). 3 residues coordinate DNA: arginine 293, arginine 312, and arginine 317.

It belongs to the RuvB family. In terms of assembly, homohexamer. Forms an RuvA(8)-RuvB(12)-Holliday junction (HJ) complex. HJ DNA is sandwiched between 2 RuvA tetramers; dsDNA enters through RuvA and exits via RuvB. An RuvB hexamer assembles on each DNA strand where it exits the tetramer. Each RuvB hexamer is contacted by two RuvA subunits (via domain III) on 2 adjacent RuvB subunits; this complex drives branch migration. In the full resolvosome a probable DNA-RuvA(4)-RuvB(12)-RuvC(2) complex forms which resolves the HJ.

It localises to the cytoplasm. The catalysed reaction is ATP + H2O = ADP + phosphate + H(+). The RuvA-RuvB-RuvC complex processes Holliday junction (HJ) DNA during genetic recombination and DNA repair, while the RuvA-RuvB complex plays an important role in the rescue of blocked DNA replication forks via replication fork reversal (RFR). RuvA specifically binds to HJ cruciform DNA, conferring on it an open structure. The RuvB hexamer acts as an ATP-dependent pump, pulling dsDNA into and through the RuvAB complex. RuvB forms 2 homohexamers on either side of HJ DNA bound by 1 or 2 RuvA tetramers; 4 subunits per hexamer contact DNA at a time. Coordinated motions by a converter formed by DNA-disengaged RuvB subunits stimulates ATP hydrolysis and nucleotide exchange. Immobilization of the converter enables RuvB to convert the ATP-contained energy into a lever motion, pulling 2 nucleotides of DNA out of the RuvA tetramer per ATP hydrolyzed, thus driving DNA branch migration. The RuvB motors rotate together with the DNA substrate, which together with the progressing nucleotide cycle form the mechanistic basis for DNA recombination by continuous HJ branch migration. Branch migration allows RuvC to scan DNA until it finds its consensus sequence, where it cleaves and resolves cruciform DNA. The chain is Holliday junction branch migration complex subunit RuvB from Paracoccus denitrificans (strain Pd 1222).